The primary structure comprises 335 residues: Fructose-1,6-bisphosphatase class 1 1 (335 aa).

Glu-92, Asp-114, Leu-116, and Asp-117 together coordinate Mg(2+). Substrate contacts are provided by residues 117 to 120 (DGSS), Asn-209, and Lys-275. Glu-281 serves as a coordination point for Mg(2+).

This sequence belongs to the FBPase class 1 family. In terms of assembly, homotetramer. The cofactor is Mg(2+).

It is found in the cytoplasm. The catalysed reaction is beta-D-fructose 1,6-bisphosphate + H2O = beta-D-fructose 6-phosphate + phosphate. The protein operates within carbohydrate biosynthesis; gluconeogenesis. This Polaromonas naphthalenivorans (strain CJ2) protein is Fructose-1,6-bisphosphatase class 1 1.